Reading from the N-terminus, the 481-residue chain is 1-acylglycerol-3-phosphate O-acyltransferase PNPLA3 (481 aa).

Residues 1 to 41 (MYDAERGWSLSFAGCGFLGFYHVGATRCLSEHAPHLLRDAR) are Cytoplasmic-facing. In terms of domain architecture, PNPLA spans 10 to 179 (LSFAGCGFLG…SDNVPFIDAK (170 aa)). The short motif at 14 to 19 (GCGFLG) is the GXGXXG element. Residues 42–62 (MLFGASAGALHCVGVLSGIPL) form a helical; Signal-anchor for type II membrane protein membrane-spanning segment. The GXSXG signature appears at 45–49 (GASAG). Ser47 functions as the Nucleophile in the catalytic mechanism. Residues 63-481 (EQTLQVLSDL…FPSFSLEKSL (419 aa)) lie on the Lumenal side of the membrane. Asn89 carries N-linked (GlcNAc...) asparagine glycosylation. Asp166 (proton acceptor) is an active-site residue. The short motif at 166–168 (DGG) is the DGA/G element. Asn280 carries an N-linked (GlcNAc...) asparagine glycan.

It localises to the membrane. The protein localises to the lipid droplet. The catalysed reaction is a 1-acyl-sn-glycero-3-phosphate + an acyl-CoA = a 1,2-diacyl-sn-glycero-3-phosphate + CoA. It carries out the reaction a triacylglycerol + H2O = a diacylglycerol + a fatty acid + H(+). The enzyme catalyses a 1-acylglycerol + a 1,3-diacylglycerol = a triacylglycerol + glycerol. It catalyses the reaction a 1-acylglycerol + a 1,2-diacylglycerol = a triacylglycerol + glycerol. The catalysed reaction is 2 a 1-acylglycerol = a 1,2-diacylglycerol + glycerol. It carries out the reaction 1-(9Z-octadecenoyl)-sn-glycero-3-phosphate + (9Z)-octadecenoyl-CoA = 1,2-di-(9Z-octadecenoyl)-sn-glycero-3-phosphate + CoA. The enzyme catalyses 1-(9Z-octadecenoyl)-sn-glycero-3-phosphate + hexadecanoyl-CoA = 1-(9Z)-octadecenoyl-2-hexadecanoyl-sn-glycero-3-phosphate + CoA. It catalyses the reaction 1-(9Z-octadecenoyl)-sn-glycero-3-phosphate + (9Z,12Z)-octadecadienoyl-CoA = 1-(9Z)-octadecenoyl-2-(9Z,12Z)-octadecadienoyl-sn-glycero-3-phosphate + CoA. The catalysed reaction is 1-(9Z-octadecenoyl)-sn-glycero-3-phosphate + (5Z,8Z,11Z,14Z)-eicosatetraenoyl-CoA = 1-(9Z)-octadecenoyl-2-(5Z,8Z,11Z,14Z)-eicosatetraenoyl-sn-glycero-3-phosphate + CoA. It carries out the reaction 2 1-(9Z-octadecenoyl)-glycerol = 1,2-di-(9Z-octadecenoyl)-glycerol + glycerol. The enzyme catalyses 1-(9Z-octadecenoyl)-glycerol + 1,2-di-(9Z-octadecenoyl)-glycerol = 1,2,3-tri-(9Z-octadecenoyl)-glycerol + glycerol. It catalyses the reaction 1-(9Z-octadecenoyl)-glycerol + 1,3-di-(9Z-octadecenoyl)-glycerol = 1,2,3-tri-(9Z-octadecenoyl)-glycerol + glycerol. The catalysed reaction is 1,2,3-tri-(9Z-octadecenoyl)-glycerol + H2O = 1,3-di-(9Z-octadecenoyl)-glycerol + (9Z)-octadecenoate + H(+). It carries out the reaction a 1,2-diacyl-sn-glycero-3-phosphocholine + H2O = a 1-acyl-sn-glycero-3-phosphocholine + a fatty acid + H(+). It functions in the pathway phospholipid metabolism. It participates in glycerolipid metabolism. The triglyceride lipase activity is inhibited by BEL ((E)-6-(bromomethylene)-3-(1-naphthalenyl)-2H-tetrahydropyran-2-one), a suicide substrate inhibitor. Its function is as follows. Specifically catalyzes coenzyme A (CoA)-dependent acylation of 1-acyl-sn-glycerol 3-phosphate (2-lysophosphatidic acid/LPA) to generate phosphatidic acid (PA), an important metabolic intermediate and precursor for both triglycerides and glycerophospholipids. Does not esterify other lysophospholipids. Acyl donors are long chain (at least C16) fatty acyl-CoAs: arachidonoyl-CoA, linoleoyl-CoA, oleoyl-CoA and at a lesser extent palmitoyl-CoA. Additionally possesses low triacylglycerol lipase and CoA-independent acylglycerol transacylase activities and thus may play a role in acyl-chain remodeling of triglycerides. In vitro may express hydrolytic activity against glycerolipids triacylglycerol, diacylglycerol and monoacylglycerol, with a strong preference for oleic acid as the acyl moiety. However, the triacylglycerol hydrolase activity is controversial and may be very low. Possesses phospholipase A2 activity. The sequence is that of 1-acylglycerol-3-phosphate O-acyltransferase PNPLA3 from Homo sapiens (Human).